Reading from the N-terminus, the 218-residue chain is Nonsense-mediated decay protein 4 (218 aa).

It localises to the cytoplasm. Involved in nonsense-mediated decay of mRNAs containing premature stop codons. The protein is Nonsense-mediated decay protein 4 (NMD4) of Saccharomyces cerevisiae (strain ATCC 204508 / S288c) (Baker's yeast).